The sequence spans 213 residues: 3-isopropylmalate dehydratase small subunit (213 aa).

It belongs to the LeuD family. LeuD type 1 subfamily. Heterodimer of LeuC and LeuD.

The catalysed reaction is (2R,3S)-3-isopropylmalate = (2S)-2-isopropylmalate. It participates in amino-acid biosynthesis; L-leucine biosynthesis; L-leucine from 3-methyl-2-oxobutanoate: step 2/4. Its function is as follows. Catalyzes the isomerization between 2-isopropylmalate and 3-isopropylmalate, via the formation of 2-isopropylmaleate. In Neisseria meningitidis serogroup C / serotype 2a (strain ATCC 700532 / DSM 15464 / FAM18), this protein is 3-isopropylmalate dehydratase small subunit.